Consider the following 205-residue polypeptide: Probable GTP-binding protein EngB (205 aa).

The EngB-type G domain occupies 21 to 196 (QVPEVAFAGR…VHEVSKCVKE (176 aa)). GTP is bound by residues 29–36 (GRSNVGKS), 56–60 (GSTRQ), 74–77 (DLPG), 141–144 (TKID), and 172–177 (IIGTSS). The Mg(2+) site is built by Ser-36 and Thr-58.

Belongs to the TRAFAC class TrmE-Era-EngA-EngB-Septin-like GTPase superfamily. EngB GTPase family. The cofactor is Mg(2+).

Necessary for normal cell division and for the maintenance of normal septation. This Anaplasma marginale (strain Florida) protein is Probable GTP-binding protein EngB.